Reading from the N-terminus, the 503-residue chain is Cytochrome P450 3A7 (503 aa).

Residue Cys442 participates in heme binding.

This sequence belongs to the cytochrome P450 family. Heme is required as a cofactor. As to expression, expressed in fetal liver (at protein level).

It localises to the endoplasmic reticulum membrane. It is found in the microsome membrane. It carries out the reaction an organic molecule + reduced [NADPH--hemoprotein reductase] + O2 = an alcohol + oxidized [NADPH--hemoprotein reductase] + H2O + H(+). It catalyses the reaction 3beta-hydroxyandrost-5-en-17-one + reduced [NADPH--hemoprotein reductase] + O2 = 3beta,16alpha-dihydroxy-androst-5-en-17-one + oxidized [NADPH--hemoprotein reductase] + H2O + H(+). The catalysed reaction is dehydroepiandrosterone 3-sulfate + reduced [NADPH--hemoprotein reductase] + O2 = 16alpha-hydroxydehydroepiandrosterone 3-sulfate + oxidized [NADPH--hemoprotein reductase] + H2O + H(+). The enzyme catalyses testosterone + reduced [NADPH--hemoprotein reductase] + O2 = 6beta,17beta-dihydroxyandrost-4-en-3-one + oxidized [NADPH--hemoprotein reductase] + H2O + H(+). It carries out the reaction estrone + reduced [NADPH--hemoprotein reductase] + O2 = 2-hydroxyestrone + oxidized [NADPH--hemoprotein reductase] + H2O + H(+). It catalyses the reaction estrone + reduced [NADPH--hemoprotein reductase] + O2 = 4-hydroxyestrone + oxidized [NADPH--hemoprotein reductase] + H2O + H(+). The catalysed reaction is estrone + reduced [NADPH--hemoprotein reductase] + O2 = 16alpha-hydroxyestrone + oxidized [NADPH--hemoprotein reductase] + H2O + H(+). The enzyme catalyses 17beta-estradiol + reduced [NADPH--hemoprotein reductase] + O2 = 2-hydroxy-17beta-estradiol + oxidized [NADPH--hemoprotein reductase] + H2O + H(+). It carries out the reaction 17beta-estradiol + reduced [NADPH--hemoprotein reductase] + O2 = 6beta-hydroxyestradiol-17beta + oxidized [NADPH--hemoprotein reductase] + H2O + H(+). It catalyses the reaction all-trans-retinoate + reduced [NADPH--hemoprotein reductase] + O2 = all-trans-4-hydroxyretinoate + oxidized [NADPH--hemoprotein reductase] + H2O + H(+). The catalysed reaction is all-trans-retinoate + reduced [NADPH--hemoprotein reductase] + O2 = all-trans-18-hydroxyretinoate + oxidized [NADPH--hemoprotein reductase] + H2O + H(+). It functions in the pathway steroid hormone biosynthesis. The protein operates within cofactor metabolism; retinol metabolism. Functionally, a cytochrome P450 monooxygenase involved in the metabolism of steroid hormones and vitamins during embryogenesis. Mechanistically, uses molecular oxygen inserting one oxygen atom into a substrate, and reducing the second into a water molecule, with two electrons provided by NADPH via cytochrome P450 reductase (NADPH--hemoprotein reductase). Catalyzes the hydroxylation of carbon-hydrogen bonds. Metabolizes 3beta-hydroxyandrost-5-en-17-one (dehydroepiandrosterone, DHEA), a precursor in the biosynthesis of androgen and estrogen steroid hormones. Exhibits high catalytic activity for the formation of hydroxyestrogens from estrone (E1), particularly D-ring hydroxylated estrone at the C16-alpha position. Mainly hydroxylates all trans-retinoic acid (atRA) to 4-hydroxyretinoate and may play a role in atRA clearance during fetal development. Also involved in the oxidative metabolism of xenobiotics including anticonvulsants. The polypeptide is Cytochrome P450 3A7 (Homo sapiens (Human)).